The primary structure comprises 285 residues: Bifunctional protein FolD (285 aa).

NADP(+) contacts are provided by residues 165-167, Ser190, and Ile231; that span reads GRS.

This sequence belongs to the tetrahydrofolate dehydrogenase/cyclohydrolase family. In terms of assembly, homodimer.

The catalysed reaction is (6R)-5,10-methylene-5,6,7,8-tetrahydrofolate + NADP(+) = (6R)-5,10-methenyltetrahydrofolate + NADPH. It catalyses the reaction (6R)-5,10-methenyltetrahydrofolate + H2O = (6R)-10-formyltetrahydrofolate + H(+). It participates in one-carbon metabolism; tetrahydrofolate interconversion. In terms of biological role, catalyzes the oxidation of 5,10-methylenetetrahydrofolate to 5,10-methenyltetrahydrofolate and then the hydrolysis of 5,10-methenyltetrahydrofolate to 10-formyltetrahydrofolate. This chain is Bifunctional protein FolD, found in Acetivibrio thermocellus (strain ATCC 27405 / DSM 1237 / JCM 9322 / NBRC 103400 / NCIMB 10682 / NRRL B-4536 / VPI 7372) (Clostridium thermocellum).